We begin with the raw amino-acid sequence, 241 residues long: DNA repair protein RecO (241 aa).

It belongs to the RecO family.

In terms of biological role, involved in DNA repair and RecF pathway recombination. The polypeptide is DNA repair protein RecO (Rickettsia canadensis (strain McKiel)).